Reading from the N-terminus, the 99-residue chain is RNA-binding protein Hfq (99 aa).

The region spanning 9–68 (DPFLNALRRERVPVSIYLVNGIKLQGQIESFDQFVILLKNTVSQMVYKHAISTVVPSRPV) is the Sm domain. The disordered stretch occupies residues 64–99 (PSRPVSHHSNNPGGGSNYHGNNTAASQQSQEADDAE).

The protein belongs to the Hfq family. As to quaternary structure, homohexamer.

Functionally, RNA chaperone that binds small regulatory RNA (sRNAs) and mRNAs to facilitate mRNA translational regulation in response to envelope stress, environmental stress and changes in metabolite concentrations. Also binds with high specificity to tRNAs. The sequence is that of RNA-binding protein Hfq from Pectobacterium carotovorum subsp. carotovorum (strain PC1).